The primary structure comprises 765 residues: 5-methyltetrahydropteroyltriglutamate--homocysteine methyltransferase (765 aa).

Lysine 18 and asparagine 116 together coordinate 5-methyltetrahydropteroyltri-L-glutamate. L-homocysteine contacts are provided by residues 437 to 439 and glutamate 490; that span reads IGS. L-methionine contacts are provided by residues 437–439 and glutamate 490; that span reads IGS. 5-methyltetrahydropteroyltri-L-glutamate contacts are provided by residues aspartate 495, tyrosine 518, 521-522, and tryptophan 567; that span reads RC. Residue aspartate 605 coordinates L-homocysteine. An L-methionine-binding site is contributed by aspartate 605. The Zn(2+) site is built by histidine 647, cysteine 649, histidine 658, aspartate 662, and glutamate 671. Residue histidine 701 is the Proton donor of the active site. Cysteine 733 serves as a coordination point for Zn(2+).

This sequence belongs to the vitamin-B12 independent methionine synthase family. Zn(2+) serves as cofactor.

It is found in the cytoplasm. The enzyme catalyses 5-methyltetrahydropteroyltri-L-glutamate + L-homocysteine = tetrahydropteroyltri-L-glutamate + L-methionine. It participates in amino-acid biosynthesis; L-methionine biosynthesis via de novo pathway; L-methionine from L-homocysteine (MetE route): step 1/1. In terms of biological role, catalyzes the transfer of a methyl group from 5-methyltetrahydrofolate to homocysteine resulting in methionine formation. This is 5-methyltetrahydropteroyltriglutamate--homocysteine methyltransferase (METE) from Mesembryanthemum crystallinum (Common ice plant).